A 388-amino-acid polypeptide reads, in one-letter code: AT-rich binding protein (388 aa).

The C2H2-type 1 zinc finger occupies 29–52 (IVCHTCQEELQTQDQFWKHIQDEH). Low complexity-rich tracts occupy residues 138–165 (QQHQ…LQQQ) and 249–265 (VSVS…STTP). Disordered stretches follow at residues 138–168 (QQHQ…QRDV) and 240–265 (PPPP…STTP). C2H2-type zinc fingers lie at residues 321 to 345 (YVCD…RVVH) and 351 to 374 (FNCE…KKKH).

The protein resides in the nucleus. Functionally, may be a transcription factor for genes having (A+T) stretches in their promoter and/or enhancer regions. Binds to AT rich DNA. This Drosophila melanogaster (Fruit fly) protein is AT-rich binding protein.